A 900-amino-acid chain; its full sequence is Phosphoenolpyruvate carboxylase (900 aa).

Catalysis depends on residues histidine 140 and lysine 568.

It belongs to the PEPCase type 1 family. It depends on Mg(2+) as a cofactor.

The enzyme catalyses oxaloacetate + phosphate = phosphoenolpyruvate + hydrogencarbonate. Its function is as follows. Forms oxaloacetate, a four-carbon dicarboxylic acid source for the tricarboxylic acid cycle. The sequence is that of Phosphoenolpyruvate carboxylase from Neisseria gonorrhoeae (strain ATCC 700825 / FA 1090).